A 272-amino-acid polypeptide reads, in one-letter code: tRNA pseudouridine synthase B (272 aa).

Asp-38 functions as the Nucleophile in the catalytic mechanism.

This sequence belongs to the pseudouridine synthase TruB family. Type 1 subfamily.

The catalysed reaction is uridine(55) in tRNA = pseudouridine(55) in tRNA. Its function is as follows. Responsible for synthesis of pseudouridine from uracil-55 in the psi GC loop of transfer RNAs. The chain is tRNA pseudouridine synthase B from Campylobacter jejuni subsp. jejuni serotype O:2 (strain ATCC 700819 / NCTC 11168).